A 623-amino-acid chain; its full sequence is Activator of C kinase protein 1 (623 aa).

A disordered region spans residues 141 to 230; that stretch reads KESLGSPAVQ…GSSGGEDKLS (90 aa). Residues 152–161 are compositionally biased toward polar residues; it reads ASISSGNRIS. Basic and acidic residues predominate over residues 176–193; the sequence is SESRILQEKVYRTEEKAP. Glycyl lysine isopeptide (Lys-Gly) (interchain with G-Cter in ubiquitin) cross-links involve residues Lys-184 and Lys-191. Over residues 206–215 the composition is skewed to polar residues; it reads KINQPPTGSA. 4 Sel1-like repeats span residues 318–361, 408–444, 495–531, and 576–611; these read PPAM…KLNN, SACM…QKGD, PLAQ…AAQP, and ARTE…RMGF.

The chain is Activator of C kinase protein 1 (ACK1) from Saccharomyces cerevisiae (strain ATCC 204508 / S288c) (Baker's yeast).